A 77-amino-acid polypeptide reads, in one-letter code: Translation initiation factor IF-1, chloroplastic (77 aa).

In terms of domain architecture, S1-like spans 1-71 (MKEQKLIHEG…TKGRIIYRLR (71 aa)).

It belongs to the IF-1 family. As to quaternary structure, component of the 30S ribosomal translation pre-initiation complex which assembles on the 30S ribosome in the order IF-2 and IF-3, IF-1 and N-formylmethionyl-tRNA(fMet); mRNA recruitment can occur at any time during PIC assembly.

It localises to the plastid. The protein localises to the chloroplast. Functionally, one of the essential components for the initiation of protein synthesis. Stabilizes the binding of IF-2 and IF-3 on the 30S subunit to which N-formylmethionyl-tRNA(fMet) subsequently binds. Helps modulate mRNA selection, yielding the 30S pre-initiation complex (PIC). Upon addition of the 50S ribosomal subunit IF-1, IF-2 and IF-3 are released leaving the mature 70S translation initiation complex. The protein is Translation initiation factor IF-1, chloroplastic of Drimys granadensis.